Here is a 419-residue protein sequence, read N- to C-terminus: Cell division protein FtsZ (419 aa).

GTP is bound by residues 22–26 (GGGGN), 109–111 (GSG), E140, R144, and D188. The interval 397 to 419 (ERFEAPISQDEDELDTPPFFKNR) is disordered.

It belongs to the FtsZ family. As to quaternary structure, homodimer. Polymerizes to form a dynamic ring structure in a strictly GTP-dependent manner. Interacts directly with several other division proteins. Interacts with CcrZ; the interaction is direct.

The protein resides in the cytoplasm. In terms of biological role, essential cell division protein that forms a contractile ring structure (Z ring) at the future cell division site. The regulation of the ring assembly controls the timing and the location of cell division. One of the functions of the FtsZ ring is to recruit other cell division proteins to the septum to produce a new cell wall between the dividing cells. Binds GTP and shows GTPase activity. This is Cell division protein FtsZ from Streptococcus pneumoniae serotype 2 (strain D39 / NCTC 7466).